Here is a 384-residue protein sequence, read N- to C-terminus: DNA replication and repair protein RecF (384 aa).

Residue 43–50 (GENGSGKT) participates in ATP binding.

This sequence belongs to the RecF family.

It is found in the cytoplasm. Its function is as follows. The RecF protein is involved in DNA metabolism; it is required for DNA replication and normal SOS inducibility. RecF binds preferentially to single-stranded, linear DNA. It also seems to bind ATP. This is DNA replication and repair protein RecF from Brucella abortus (strain 2308).